A 352-amino-acid chain; its full sequence is Photosystem II D2 protein (352 aa).

Residues 40 to 60 (CAYLALGGWLTGTTFVTSWYT) traverse the membrane as a helical segment. Chlorophyll a is bound at residue His-117. Residues 124–140 (GFMLRQFEIARLVGVRP) traverse the membrane as a helical segment. Pheophytin a-binding residues include Gln-129 and Asn-142. A helical membrane pass occupies residues 152 to 165 (VFVSVFLIYPLGQS). Chlorophyll a is bound at residue His-197. The helical transmembrane segment at 207–227 (GALLCAIHGATVENTLYKDGE) threads the bilayer. Residues His-214 and Phe-261 each contribute to the a plastoquinone site. A Fe cation-binding site is contributed by His-214. Residue His-268 participates in Fe cation binding. A helical membrane pass occupies residues 278–294 (GLWMSSIGVVGLALNLR).

The protein belongs to the reaction center PufL/M/PsbA/D family. In terms of assembly, PSII is composed of 1 copy each of membrane proteins PsbA, PsbB, PsbC, PsbD, PsbE, PsbF, PsbH, PsbI, PsbJ, PsbK, PsbL, PsbM, PsbT, PsbX, PsbY, PsbZ, Psb30/Ycf12, peripheral proteins PsbO, CyanoQ (PsbQ), PsbU, PsbV and a large number of cofactors. It forms dimeric complexes. The cofactor is The D1/D2 heterodimer binds P680, chlorophylls that are the primary electron donor of PSII, and subsequent electron acceptors. It shares a non-heme iron and each subunit binds pheophytin, quinone, additional chlorophylls, carotenoids and lipids. There is also a Cl(-1) ion associated with D1 and D2, which is required for oxygen evolution. The PSII complex binds additional chlorophylls, carotenoids and specific lipids..

The protein resides in the cellular thylakoid membrane. The enzyme catalyses 2 a plastoquinone + 4 hnu + 2 H2O = 2 a plastoquinol + O2. Photosystem II (PSII) is a light-driven water:plastoquinone oxidoreductase that uses light energy to abstract electrons from H(2)O, generating O(2) and a proton gradient subsequently used for ATP formation. It consists of a core antenna complex that captures photons, and an electron transfer chain that converts photonic excitation into a charge separation. The D1/D2 (PsbA/PsbD) reaction center heterodimer binds P680, the primary electron donor of PSII as well as several subsequent electron acceptors. D2 is needed for assembly of a stable PSII complex. In Synechococcus sp. (strain JA-3-3Ab) (Cyanobacteria bacterium Yellowstone A-Prime), this protein is Photosystem II D2 protein.